The sequence spans 198 residues: FMN-dependent NADH:quinone oxidoreductase (198 aa).

Position 96-99 (96-99 (MYNF)) interacts with FMN.

Belongs to the azoreductase type 1 family. As to quaternary structure, homodimer. Requires FMN as cofactor.

The catalysed reaction is 2 a quinone + NADH + H(+) = 2 a 1,4-benzosemiquinone + NAD(+). It catalyses the reaction N,N-dimethyl-1,4-phenylenediamine + anthranilate + 2 NAD(+) = 2-(4-dimethylaminophenyl)diazenylbenzoate + 2 NADH + 2 H(+). Functionally, quinone reductase that provides resistance to thiol-specific stress caused by electrophilic quinones. Also exhibits azoreductase activity. Catalyzes the reductive cleavage of the azo bond in aromatic azo compounds to the corresponding amines. The polypeptide is FMN-dependent NADH:quinone oxidoreductase (Burkholderia mallei (strain ATCC 23344)).